We begin with the raw amino-acid sequence, 428 residues long: Probable 4-methylmuconolactone transporter (428 aa).

Over 1-26 (MFAWYKAGSPQQKKTFWACYSGWALD) the chain is Cytoplasmic. Residues 27 to 47 (SFDMQMFSFLLPALTLTWGLT) form a helical membrane-spanning segment. Over 48 to 50 (KAE) the chain is Periplasmic. The chain crosses the membrane as a helical span at residues 51-71 (VGVLGTVALVVTAIGGWGAGI). Topologically, residues 72–80 (LSDRYGRAR) are cytoplasmic. A helical transmembrane segment spans residues 81-101 (ILVLAIIWFTLFGVLAGFAQS). The Periplasmic portion of the chain corresponds to 102 to 110 (YQQLLIART). A helical transmembrane segment spans residues 111–131 (LQGLGFGGEWAVGAALMAEVI). Residues 132–145 (DSRHRGKAIGFVQS) are Cytoplasmic-facing. Residues 146 to 166 (GFALGWALAVVVATLLLAWLP) traverse the membrane as a helical segment. A topological domain (periplasmic) is located at residue Lys-167. Residues 168 to 188 (EMAWRVAFWSGIIPALIVLFI) traverse the membrane as a helical segment. The Cytoplasmic segment spans residues 189–227 (RRHVKDSSMFERARQSRAPRASLSSVFNRKYARTLALSS). Residues 228–248 (VLVIGLQAGCYAILVWLPSLL) form a helical membrane-spanning segment. The Periplasmic portion of the chain corresponds to 249 to 252 (NQRQ). Residues 253–273 (VAAGSMIVTVFIMAFGSFCGF) traverse the membrane as a helical segment. The Cytoplasmic segment spans residues 274–287 (AVTADLSDRIGRRP). A helical membrane pass occupies residues 288–308 (TLILLSVCAWIVTVSYMLLPL). Residues 309-314 (NTTLTA) are Periplasmic-facing. The chain crosses the membrane as a helical span at residues 315 to 335 (ILGFLVGFSAIGMFAALGPFL). The Cytoplasmic segment spans residues 336 to 356 (SELFPTNVRTTCMGFAYNVGK). A helical transmembrane segment spans residues 357–371 (SIGAGSVVGVGVLST). Topologically, residues 372 to 377 (HIGLAN) are periplasmic. A helical membrane pass occupies residues 378–398 (AMGTFCLVAYAFAVFGIMLLP). Residues 399-428 (ETRGIAIENIGEADAHSPAAPLAQPASARS) lie on the Cytoplasmic side of the membrane.

It belongs to the major facilitator superfamily. Sugar transporter (TC 2.A.1.1) family.

It localises to the cell inner membrane. Functionally, probable uptake of 4-methylmuconolactone. This is Probable 4-methylmuconolactone transporter from Cupriavidus pinatubonensis (strain JMP 134 / LMG 1197) (Cupriavidus necator (strain JMP 134)).